The chain runs to 208 residues: Small ribosomal subunit protein uS4 (208 aa).

Residues 97 to 158 form the S4 RNA-binding domain; the sequence is TRLDNVIYRM…RAQKYLCVQE (62 aa).

It belongs to the universal ribosomal protein uS4 family. In terms of assembly, part of the 30S ribosomal subunit. Contacts protein S5. The interaction surface between S4 and S5 is involved in control of translational fidelity.

One of the primary rRNA binding proteins, it binds directly to 16S rRNA where it nucleates assembly of the body of the 30S subunit. Its function is as follows. With S5 and S12 plays an important role in translational accuracy. This Xylella fastidiosa (strain M12) protein is Small ribosomal subunit protein uS4.